A 326-amino-acid chain; its full sequence is Vitamin B12 import system permease protein BtuC (326 aa).

Transmembrane regions (helical) follow at residues 15–35 (WLLS…CAGE), 61–81 (LAVL…QALF), 88–108 (PGLL…VLLG), 112–132 (LPGW…TLIL), 146–166 (LLAG…AIYF), 184–204 (GGVD…LIWI), 240–260 (GWMV…GLVI), 274–294 (VLLP…DVVA), and 302–322 (ELPI…WLLL).

It belongs to the binding-protein-dependent transport system permease family. FecCD subfamily. As to quaternary structure, the complex is composed of two ATP-binding proteins (BtuD), two transmembrane proteins (BtuC) and a solute-binding protein (BtuF).

It localises to the cell inner membrane. Part of the ABC transporter complex BtuCDF involved in vitamin B12 import. Involved in the translocation of the substrate across the membrane. The protein is Vitamin B12 import system permease protein BtuC of Salmonella choleraesuis (strain SC-B67).